The chain runs to 601 residues: Transcription factor Ken (601 aa).

The 69-residue stretch at 33 to 101 folds into the BTB domain; it reads ADLTIVCENK…LYSGQTCITS (69 aa). Disordered stretches follow at residues 188 to 276, 331 to 365, and 471 to 491; these read AAEC…TINP, LSDG…DNQP, and DHPE…AGSN. 2 stretches are compositionally biased toward basic and acidic residues: residues 190 to 200 and 207 to 216; these read ECERSGGHNNK and CTHKDNKSDK. A compositionally biased stretch (polar residues) spans 223 to 234; the sequence is NLSNAPPSGTSG. Residues 235–247 show a composition bias toward low complexity; that stretch reads SNSNISTSSNHQQ. Residues 248-258 show a composition bias toward basic residues; that stretch reads QQHHHHHHHNH. Low complexity predominate over residues 259 to 275; sequence NNNNNNNNNNSSSSTIN. The segment covering 476–490 has biased composition (low complexity); that stretch reads RSGSASGSGANLAGS. 3 consecutive C2H2-type zinc fingers follow at residues 500–522, 528–551, and 567–590; these read YRCE…LRVH, FACR…CSVH, and YSCC…SGHH.

As to expression, expressed from stage 5 in two rather faint stripes at positions of 64% (anterior domain; AD) and 17% (posterior domain; PD) egg length. During early gastrulation, at stage 6, these two stripes become more evident and detectable at the region posterior to the cephalic furrow and in the hindgut primordium. The AD disappears as gastrulation proceeds, while the PD remains. At stage 15, the AD appears again in the foregut, and PD expression in the hindgut and anal pad. In imaginal disks, it is ubiquitously expressed in both males and females in genital and eye-antennal disks. Not expressed in the brain. In genital disks, it is expressed along the margin of the anterior bulbus in males, while in females it is expressed in the posterior compartment along the anterior-posterior border, with medial expansion in the most posterior region.

The protein localises to the nucleus. In terms of biological role, transcription factor required for terminalia development. Negative regulator of the JAK/STAT pathway: represses JAK/STAT-dependent expression of ventral veins lacking (vvl) in the posterior spiracles. The protein is Transcription factor Ken (ken) of Drosophila melanogaster (Fruit fly).